Reading from the N-terminus, the 2254-residue chain is Voltage-dependent T-type calcium channel subunit alpha-1G (2254 aa).

The segment at 1–48 is disordered; sequence MDEEEDGAGAEESGQPRSFTQLNDLSGAGGRQGPGSTEKDPGSADSEA. Residues 1 to 80 lie on the Cytoplasmic side of the membrane; sequence MDEEEDGAGA…RSWCLRTVCN (80 aa). Residues 15–24 show a composition bias toward polar residues; it reads QPRSFTQLND. The stretch at 68 to 398 is one I repeat; the sequence is SRPRSWCLRT…LCLVVIATQF (331 aa). The helical transmembrane segment at 81 to 101 threads the bilayer; it reads PWFERVSMLVILLNCVTLGMF. Over 102 to 119 the chain is Extracellular; sequence RPCEDIACDSQRCRILQA. Residues 120–141 form a helical membrane-spanning segment; that stretch reads FDDFIFAFFAVEMVVKMVALGI. The Cytoplasmic segment spans residues 142–150; that stretch reads FGKKCYLGD. The chain crosses the membrane as a helical span at residues 151–170; sequence TWNRLDFFIVIAGMLEYSLD. Residues 171–175 lie on the Extracellular side of the membrane; that stretch reads LQNVS. N-linked (GlcNAc...) asparagine glycosylation is present at Asn-173. The chain crosses the membrane as a helical span at residues 176-193; sequence FSAVRTVRVLRPLRAINR. Topologically, residues 194 to 213 are cytoplasmic; that stretch reads VPSMRILVTLLLDTLPMLGN. Residues 214-234 traverse the membrane as a helical segment; the sequence is VLLLCFFVFFIFGIVGVQLWA. The Extracellular segment spans residues 235–370; sequence GLLRNRCFLP…YFVMDAHSFY (136 aa). Residues Asn-246, Asn-306, Asn-310, and Asn-322 are each glycosylated (N-linked (GlcNAc...) asparagine). Residues 371–395 traverse the membrane as a helical segment; the sequence is NFIYFILLIIVGSFFMINLCLVVIA. The Cytoplasmic portion of the chain corresponds to 396 to 744; sequence TQFSETKQRE…DTFRKIVDSK (349 aa). At Ser-467 the chain carries Phosphoserine. Basic residues predominate over residues 494 to 506; it reads LVHHHHHHHHHYH. Disordered regions lie at residues 494-513, 525-553, 579-598, and 699-721; these read LVHHHHHHHHHYHLGNGTLR, DANGSRRLMLPPPSTPTPSGGPPRGAESV, ASGRTVGSGKVYPTVHTSPP, and DAQHSDLRDPHSRRRQRSLGPDA. Positions 534–545 are enriched in pro residues; sequence LPPPSTPTPSGG. Residue Ser-716 is modified to Phosphoserine. The stretch at 730–968 is one II repeat; it reads WRLICDTFRK…LLVAILVEGF (239 aa). The helical transmembrane segment at 745 to 765 threads the bilayer; it reads YFGRGIMIAILVNTLSMGIEY. Over 766–778 the chain is Extracellular; sequence HEQPEELTNALEI. Residues 779–800 traverse the membrane as a helical segment; it reads SNIVFTSLFALEMLLKLLVYGP. Over 801–806 the chain is Cytoplasmic; that stretch reads FGYIKN. A helical membrane pass occupies residues 807–825; the sequence is PYNIFDGVIVVISVWEIVG. Residues 826–833 lie on the Extracellular side of the membrane; the sequence is QQGGGLSV. A helical membrane pass occupies residues 834 to 857; that stretch reads LRTFRLMRVLKLVRFLPALQRQLV. At 858 to 868 the chain is on the cytoplasmic side; sequence VLMKTMDNVAT. The helical transmembrane segment at 869-889 threads the bilayer; that stretch reads FCMLLMLFIFIFSILGMHLFG. Over 890 to 940 the chain is Extracellular; it reads CKFASERDGDTLPDRKNFDSLLWAIVTVFQILTQEDWNKVLYNGMASTSSW. The chain crosses the membrane as a helical span at residues 941–965; it reads AALYFIALMTFGNYVLFNLLVAILV. At 966-1251 the chain is on the cytoplasmic side; sequence EGFQAEGDAT…SRFRLLCHRI (286 aa). A disordered region spans residues 1024 to 1209; that stretch reads TPMSHPKSSS…GDDDNDEGNL (186 aa). Composition is skewed to low complexity over residues 1041 to 1052 and 1065 to 1091; these read GSGSRRTSSSGS and PPSARSSPHSPWSAASSWTSRRSSRNS. 2 stretches are compositionally biased toward acidic residues: residues 1117–1126 and 1196–1206; these read ESQDEEESSE and PQLDGDDDNDE. Ser-1118, Ser-1124, and Ser-1125 each carry phosphoserine. Residues 1242–1519 form an III repeat; it reads SRFRLLCHRI…MFVGVVVENF (278 aa). The helical transmembrane segment at 1252–1274 threads the bilayer; sequence ITHKMFDHVVLVIIFLNCITIAM. Residues 1275 to 1292 lie on the Extracellular side of the membrane; that stretch reads ERPKIDPHSAERIFLTLS. The helical transmembrane segment at 1293 to 1313 threads the bilayer; that stretch reads NYIFTAVFLAEMTVKVVALGW. The Cytoplasmic segment spans residues 1314-1323; it reads CFGEQAYLRS. A helical transmembrane segment spans residues 1324–1343; the sequence is SWNVLDGLLVLISVIDILVS. Residues 1344-1357 lie on the Extracellular side of the membrane; it reads MVSDSGTKILGMLR. Residues 1358 to 1379 form a helical membrane-spanning segment; the sequence is VLRLLRTLRPLRVISRAQGLKL. The Cytoplasmic portion of the chain corresponds to 1380–1389; sequence VVETLMSSLK. The helical transmembrane segment at 1390 to 1413 threads the bilayer; sequence PIGNIVVICCAFFIIFGILGVQLF. Residues 1414–1490 are Extracellular-facing; it reads KGKFFVCQGE…DQQPIMNHNP (77 aa). 2 N-linked (GlcNAc...) asparagine glycosylation sites follow: Asn-1427 and Asn-1430. A helical membrane pass occupies residues 1491 to 1516; the sequence is WMLLYFISFLLIVAFFVLNMFVGVVV. Residues 1517-1578 are Cytoplasmic-facing; it reads ENFHKCRQHQ…RLLVHHLCTS (62 aa). The stretch at 1564–1822 is one IV repeat; the sequence is DYSRFRLLVH…VVIAVLMKHL (259 aa). A helical membrane pass occupies residues 1579-1599; sequence HYLDLFITGVIGLNVVTMAME. The Extracellular portion of the chain corresponds to 1600–1613; the sequence is HYQQPQILDEALKI. The helical transmembrane segment at 1614-1635 threads the bilayer; the sequence is CNYIFTVIFVFESVFKLVAFGF. Topologically, residues 1636–1642 are cytoplasmic; that stretch reads RRFFQDR. A helical membrane pass occupies residues 1643 to 1661; the sequence is WNQLDLAIVLLSIMGITLE. Residues 1662–1675 lie on the Extracellular side of the membrane; sequence EIEVNLSLPINPTI. N-linked (GlcNAc...) asparagine glycosylation is present at Asn-1666. Residues 1676–1699 traverse the membrane as a helical segment; it reads IRIMRVLRIARVLKLLKMAVGMRA. Over 1700 to 1713 the chain is Cytoplasmic; the sequence is LLHTVMQALPQVGN. A helical transmembrane segment spans residues 1714–1734; it reads LGLLFMLLFFIFAALGVELFG. Residues 1735-1794 lie on the Extracellular side of the membrane; it reads DLECDETHPCEGLGRHATFRNFGMAFLTLFRVSTGDNWNGIMKDTLRDCDQESTCYNTVI. Residues 1795–1822 traverse the membrane as a helical segment; that stretch reads SPIYFVSFVLTAQFVLVNVVIAVLMKHL. Topologically, residues 1823–2254 are cytoplasmic; the sequence is EESNKEAKEE…LSSDPTDMDP (432 aa). The tract at residues 2153-2254 is disordered; the sequence is DSGSQPRLCP…LSSDPTDMDP (102 aa). Over residues 2184–2193 the composition is skewed to low complexity; it reads SPPSISIDPP. Composition is skewed to polar residues over residues 2220–2232 and 2240–2254; these read PSVSSPLDSTAAS and LSLSGLSSDPTDMDP.

It belongs to the calcium channel alpha-1 subunit (TC 1.A.1.11) family. CACNA1G subfamily. In response to raising of intracellular calcium, the T-type channels are activated by CaM-kinase II. In terms of tissue distribution, highly expressed in brain. Moderate expression in heart; low expression in placenta, kidney and lung.

Its subcellular location is the cell membrane. The protein localises to the cytoplasm. It catalyses the reaction Ca(2+)(in) = Ca(2+)(out). In terms of biological role, voltage-sensitive calcium channels (VSCC) mediate the entry of calcium ions into excitable cells and are also involved in a variety of calcium-dependent processes, including muscle contraction, hormone or neurotransmitter release, gene expression, cell motility, cell division and cell death. The isoform alpha-1G gives rise to T-type calcium currents. T-type calcium channels belong to the 'low-voltage activated (LVA)' group and are strongly blocked by nickel and mibefradil. A particularity of this type of channels is an opening at quite negative potentials and a voltage-dependent inactivation. T-type channels serve pacemaking functions in both central neurons and cardiac nodal cells and support calcium signaling in secretory cells and vascular smooth muscle. They may also be involved in the modulation of firing patterns of neurons which is important for information processing as well as in cell growth processes. This chain is Voltage-dependent T-type calcium channel subunit alpha-1G (Cacna1g), found in Rattus norvegicus (Rat).